The following is a 58-amino-acid chain: Cyclotide trypsin inhibitor TopI1 (58 aa).

Positions 1 to 23 are cleaved as a signal peptide; that stretch reads MKFIIVLLLLTALTLTSIPVIEG. The cyclopeptide (Ile-Lys) cross-link spans 24–55; the sequence is ILKRCKTYDDCKDVCKARKGKCEFGICKCMIK. Intrachain disulfides connect Cys28/Cys45, Cys34/Cys50, and Cys38/Cys52. Ser56 is subject to Serine amide.

Post-translationally, this is a cyclic peptide. Expressed by the venom gland.

It localises to the secreted. Its function is as follows. First cyclic scorpion trypsin inhibitor (Kd~0.5 nM). Does not inhibit chymotrypsin. This is Cyclotide trypsin inhibitor TopI1 from Tityus obscurus (Amazonian scorpion).